A 147-amino-acid polypeptide reads, in one-letter code: 3-hydroxyacyl-[acyl-carrier-protein] dehydratase FabZ (147 aa).

His49 is an active-site residue.

The protein belongs to the thioester dehydratase family. FabZ subfamily.

It is found in the cytoplasm. It carries out the reaction a (3R)-hydroxyacyl-[ACP] = a (2E)-enoyl-[ACP] + H2O. In terms of biological role, involved in unsaturated fatty acids biosynthesis. Catalyzes the dehydration of short chain beta-hydroxyacyl-ACPs and long chain saturated and unsaturated beta-hydroxyacyl-ACPs. This chain is 3-hydroxyacyl-[acyl-carrier-protein] dehydratase FabZ, found in Alkaliphilus metalliredigens (strain QYMF).